Reading from the N-terminus, the 173-residue chain is Peptidoglycan-associated lipoprotein (173 aa).

Residues 1–21 (MQLNKVLKGLMIALPVMAIAA) form the signal peptide. A lipid anchor (N-palmitoyl cysteine) is attached at cysteine 22. Residue cysteine 22 is the site of S-diacylglycerol cysteine attachment. The segment at 30–58 (NDGSEGMLGAGTGMDANGGNGNMSSEEQA) is disordered. Over residues 35–50 (GMLGAGTGMDANGGNG) the composition is skewed to gly residues. Positions 60–173 (LQMQQLQQNN…SKNRRAVLVY (114 aa)) constitute an OmpA-like domain.

This sequence belongs to the Pal lipoprotein family. As to quaternary structure, the Tol-Pal system is composed of five core proteins: the inner membrane proteins TolA, TolQ and TolR, the periplasmic protein TolB and the outer membrane protein Pal. They form a network linking the inner and outer membranes and the peptidoglycan layer.

It is found in the cell outer membrane. In terms of biological role, part of the Tol-Pal system, which plays a role in outer membrane invagination during cell division and is important for maintaining outer membrane integrity. This Escherichia coli O157:H7 protein is Peptidoglycan-associated lipoprotein.